Reading from the N-terminus, the 498-residue chain is MNVSFITQYTSSIDADAAILLQVEKFEKTFGLELVDPNRIIKKGYLIENFQGSFGSQIKFLYLEGSPFAFVKVVGLGKEQSINDETWLKAGGLCVSEIKNYPKKVVVFADALGIDVSTTQIMNFVLGALLKQYSFECYYTDKKKSKQKNKNILELVIITKNAENCQKELKQVQAICEGVNLTKELVNEPANILGTEEFVEKIKKLEKLNVKVQVLDKEKLKELGMNALLSVAQGSSRPPYLVIMQWNGSDNKEEEPLAFVGKGVVFDSGGISIKHSSGMEDMKADMGGAGTVVGLMHTLATRKAKINVTGVVGLVENMPSCHAQRPGDIVTSMSGQTIEVINTDAEGRMVLADVLWYCKTKIQPKLIVDLATLTGAIRIALGEQHAGLFSNNEALAKQIIKSGEATSEKVWQLPLGLEYDKLIDSKFADMKNSSGGSAGSITAAQFLKRFVDEKTPWAHIDIAAVCMGNKLNEFNNSWASGFGVRLLNYLIKNYYEQK.

Residues lysine 262 and aspartate 267 each contribute to the Mn(2+) site. Residue lysine 274 is part of the active site. Aspartate 285, aspartate 344, and glutamate 346 together coordinate Mn(2+). Arginine 348 is a catalytic residue.

Belongs to the peptidase M17 family. It depends on Mn(2+) as a cofactor.

It is found in the cytoplasm. It carries out the reaction Release of an N-terminal amino acid, Xaa-|-Yaa-, in which Xaa is preferably Leu, but may be other amino acids including Pro although not Arg or Lys, and Yaa may be Pro. Amino acid amides and methyl esters are also readily hydrolyzed, but rates on arylamides are exceedingly low.. The enzyme catalyses Release of an N-terminal amino acid, preferentially leucine, but not glutamic or aspartic acids.. Presumably involved in the processing and regular turnover of intracellular proteins. Catalyzes the removal of unsubstituted N-terminal amino acids from various peptides. This Phytoplasma mali (strain AT) protein is Probable cytosol aminopeptidase.